Reading from the N-terminus, the 100-residue chain is Large ribosomal subunit protein bL21 (100 aa).

It belongs to the bacterial ribosomal protein bL21 family. As to quaternary structure, part of the 50S ribosomal subunit. Contacts proteins L15 and L20.

Binds directly to 23S rRNA, probably serving to organize its structure. The chain is Large ribosomal subunit protein bL21 from Deinococcus radiodurans (strain ATCC 13939 / DSM 20539 / JCM 16871 / CCUG 27074 / LMG 4051 / NBRC 15346 / NCIMB 9279 / VKM B-1422 / R1).